Here is a 348-residue protein sequence, read N- to C-terminus: 5-deoxyribose 1-phosphate isomerase (348 aa).

Substrate-binding positions include 49-51 (RGA), R92, and Q199. Residue D240 is the Proton donor of the active site. 250 to 251 (NK) serves as a coordination point for substrate.

It belongs to the EIF-2B alpha/beta/delta subunits family. DrdI subfamily. In terms of assembly, homodimer.

The enzyme catalyses 5-deoxy-alpha-D-ribose 1-phosphate = 5-deoxy-D-ribulose 1-phosphate. It carries out the reaction 5-(methylsulfanyl)-alpha-D-ribose 1-phosphate = 5-(methylsulfanyl)-D-ribulose 1-phosphate. Its pathway is carbohydrate degradation. Catalyzes the isomerization of 5-deoxy-alpha-D-ribose 1-phosphate to 5-deoxy-D-ribulose 1-phosphate, as part of a 5-deoxyribose salvage pathway that recycles this toxic radical SAM enzyme by-product to mainstream metabolites. Also seems to be able to catalyze the conversion of methylthioribose-1-phosphate (MTR-1-P) into methylthioribulose-1-phosphate (MTRu-1-P). However this enzyme may not function in methionine salvage in B.thuringiensis since it exists a paralog (MtnA) present in the methionine salvage pathway cluster. This Bacillus thuringiensis serovar kurstaki (strain ATCC 35866 / NRRL B-4488 / HD73) protein is 5-deoxyribose 1-phosphate isomerase.